The chain runs to 98 residues: NADH-ubiquinone oxidoreductase chain 4L (98 aa).

3 helical membrane passes run 1 to 21 (MSITTLNIMVAFTMALLGMFT), 29 to 49 (SLLCLEGMMLSLFMLATIVSL), and 61 to 81 (VILLVFAACEAAVGLALLVMV).

Belongs to the complex I subunit 4L family. In terms of assembly, core subunit of respiratory chain NADH dehydrogenase (Complex I) which is composed of 45 different subunits.

The protein resides in the mitochondrion inner membrane. The enzyme catalyses a ubiquinone + NADH + 5 H(+)(in) = a ubiquinol + NAD(+) + 4 H(+)(out). Functionally, core subunit of the mitochondrial membrane respiratory chain NADH dehydrogenase (Complex I) which catalyzes electron transfer from NADH through the respiratory chain, using ubiquinone as an electron acceptor. Part of the enzyme membrane arm which is embedded in the lipid bilayer and involved in proton translocation. This Ochotona collaris (Collared pika) protein is NADH-ubiquinone oxidoreductase chain 4L (MT-ND4L).